A 214-amino-acid chain; its full sequence is Adenylate kinase (214 aa).

10–15 lines the ATP pocket; that stretch reads GAGKGT. The interval 30 to 59 is NMP; that stretch reads STGDMLRAAVKAGTELGKQAKEIMDAGKLV. Residues T31, R36, 57 to 59, 85 to 88, and Q92 each bind AMP; these read KLV and GFPR. The tract at residues 122–159 is LID; that stretch reads GRRVHAASGRVYHVKFNPPKVEDKDDVTGEDLSVRKDD. ATP is bound by residues R123 and 132-133; that span reads VY. AMP-binding residues include R156 and R167. R200 lines the ATP pocket.

Belongs to the adenylate kinase family. As to quaternary structure, monomer.

It localises to the cytoplasm. It carries out the reaction AMP + ATP = 2 ADP. The protein operates within purine metabolism; AMP biosynthesis via salvage pathway; AMP from ADP: step 1/1. In terms of biological role, catalyzes the reversible transfer of the terminal phosphate group between ATP and AMP. Plays an important role in cellular energy homeostasis and in adenine nucleotide metabolism. The chain is Adenylate kinase from Pectobacterium atrosepticum (strain SCRI 1043 / ATCC BAA-672) (Erwinia carotovora subsp. atroseptica).